We begin with the raw amino-acid sequence, 472 residues long: Aspartyl/glutamyl-tRNA(Asn/Gln) amidotransferase subunit B (472 aa).

This sequence belongs to the GatB/GatE family. GatB subfamily. In terms of assembly, heterotrimer of A, B and C subunits.

It carries out the reaction L-glutamyl-tRNA(Gln) + L-glutamine + ATP + H2O = L-glutaminyl-tRNA(Gln) + L-glutamate + ADP + phosphate + H(+). It catalyses the reaction L-aspartyl-tRNA(Asn) + L-glutamine + ATP + H2O = L-asparaginyl-tRNA(Asn) + L-glutamate + ADP + phosphate + 2 H(+). Its function is as follows. Allows the formation of correctly charged Asn-tRNA(Asn) or Gln-tRNA(Gln) through the transamidation of misacylated Asp-tRNA(Asn) or Glu-tRNA(Gln) in organisms which lack either or both of asparaginyl-tRNA or glutaminyl-tRNA synthetases. The reaction takes place in the presence of glutamine and ATP through an activated phospho-Asp-tRNA(Asn) or phospho-Glu-tRNA(Gln). The sequence is that of Aspartyl/glutamyl-tRNA(Asn/Gln) amidotransferase subunit B from Elusimicrobium minutum (strain Pei191).